Consider the following 464-residue polypeptide: NADH-quinone oxidoreductase subunit N 2 (464 aa).

A run of 14 helical transmembrane segments spans residues 12–32, 33–53, 62–82, 93–113, 117–137, 152–172, 189–209, 227–247, 254–274, 282–304, 310–330, 351–371, 400–420, and 434–454; these read VGII…LIGF, LGFL…LAGY, INAF…FVIF, TFVE…IMVS, LAVI…SVGM, LVLG…YIGA, FALA…AAPF, FIST…ASYI, FSYI…LVAY, MLAY…YNPL, IFYV…LSIL, PFLA…PPFA, IIAA…EPAT, and IGIS…NILF.

The protein belongs to the complex I subunit 2 family. As to quaternary structure, NDH-1 is composed of 14 different subunits. Subunits NuoA, H, J, K, L, M, N constitute the membrane sector of the complex.

Its subcellular location is the cell inner membrane. The enzyme catalyses a quinone + NADH + 5 H(+)(in) = a quinol + NAD(+) + 4 H(+)(out). NDH-1 shuttles electrons from NADH, via FMN and iron-sulfur (Fe-S) centers, to quinones in the respiratory chain. The immediate electron acceptor for the enzyme in this species is believed to be ubiquinone. Couples the redox reaction to proton translocation (for every two electrons transferred, four hydrogen ions are translocated across the cytoplasmic membrane), and thus conserves the redox energy in a proton gradient. The chain is NADH-quinone oxidoreductase subunit N 2 from Hydrogenobaculum sp. (strain Y04AAS1).